We begin with the raw amino-acid sequence, 304 residues long: Glutaminase (304 aa).

Residues Ser-63, Asn-113, Glu-157, Asn-164, Tyr-188, Tyr-240, and Val-258 each contribute to the substrate site.

This sequence belongs to the glutaminase family. As to quaternary structure, homotetramer.

It catalyses the reaction L-glutamine + H2O = L-glutamate + NH4(+). The polypeptide is Glutaminase (Ralstonia nicotianae (strain ATCC BAA-1114 / GMI1000) (Ralstonia solanacearum)).